We begin with the raw amino-acid sequence, 227 residues long: Agamous-like MADS-box protein AGL8 homolog (227 aa).

The MADS-box domain maps to 3–57; sequence RGRVQLKRIENKINRQVTFSKRRSGLLKKAHEISVLCDAEVGLIVFSTKGKLFEY. Residues 88–178 form the K-box domain; the sequence is PVSWTLEHRK…SKKVKEREKS (91 aa).

As to expression, flower specific.

It is found in the nucleus. Its function is as follows. Probable transcription factor. This Solanum lycopersicum (Tomato) protein is Agamous-like MADS-box protein AGL8 homolog (TDR4).